The primary structure comprises 1195 residues: ATP-dependent DNA helicase Hel308 (1195 aa).

Residues Gln20 and 39–46 each bind ATP; that span reads IPTASGKT. One can recognise a Helicase ATP-binding domain in the interval 26-196; that stretch reads RGLLDKNKNF…WLNAELIVDD (171 aa). The DEAH box signature appears at 143-146; it reads DEIH. The DOD-type homing endonuclease domain maps to 451–584; sequence FIGYFIGDGY…LQFVLLRFGI (134 aa).

The protein belongs to the helicase family. Hel308 subfamily. In terms of assembly, monomer. This protein undergoes a protein self splicing that involves a post-translational excision of the intervening region (intein) followed by peptide ligation.

The enzyme catalyses Couples ATP hydrolysis with the unwinding of duplex DNA by translocating in the 3'-5' direction.. The catalysed reaction is ATP + H2O = ADP + phosphate + H(+). DNA-dependent ATPase and 3'-5' DNA helicase that may be involved in repair of stalled replication forks. This chain is ATP-dependent DNA helicase Hel308, found in Methanocaldococcus jannaschii (strain ATCC 43067 / DSM 2661 / JAL-1 / JCM 10045 / NBRC 100440) (Methanococcus jannaschii).